The chain runs to 81 residues: Sulfur carrier protein TusA (81 aa).

The active-site Cysteine persulfide intermediate is the cysteine 19.

Belongs to the sulfur carrier protein TusA family. As to quaternary structure, interacts with IscS.

The protein localises to the cytoplasm. The protein operates within tRNA modification. Sulfur carrier protein involved in sulfur trafficking in the cell. Part of a sulfur-relay system required for 2-thiolation during synthesis of 2-thiouridine of the modified wobble base 5-methylaminomethyl-2-thiouridine (mnm(5)s(2)U) in tRNA. Interacts with IscS and stimulates its cysteine desulfurase activity. Accepts an activated sulfur from IscS, which is then transferred to TusD, and thus determines the direction of sulfur flow from IscS to 2-thiouridine formation. Also appears to be involved in sulfur transfer for the biosynthesis of molybdopterin. The polypeptide is Sulfur carrier protein TusA (Salmonella choleraesuis (strain SC-B67)).